Reading from the N-terminus, the 354-residue chain is UDP-N-acetylglucosamine--N-acetylmuramyl-(pentapeptide) pyrophosphoryl-undecaprenol N-acetylglucosamine transferase 1 (354 aa).

Residues 12-14 (TAG), arginine 163, serine 193, and glutamine 287 contribute to the UDP-N-acetyl-alpha-D-glucosamine site.

This sequence belongs to the glycosyltransferase 28 family. MurG subfamily.

It is found in the cell membrane. It carries out the reaction di-trans,octa-cis-undecaprenyl diphospho-N-acetyl-alpha-D-muramoyl-L-alanyl-D-glutamyl-meso-2,6-diaminopimeloyl-D-alanyl-D-alanine + UDP-N-acetyl-alpha-D-glucosamine = di-trans,octa-cis-undecaprenyl diphospho-[N-acetyl-alpha-D-glucosaminyl-(1-&gt;4)]-N-acetyl-alpha-D-muramoyl-L-alanyl-D-glutamyl-meso-2,6-diaminopimeloyl-D-alanyl-D-alanine + UDP + H(+). It functions in the pathway cell wall biogenesis; peptidoglycan biosynthesis. Its function is as follows. Cell wall formation. Catalyzes the transfer of a GlcNAc subunit on undecaprenyl-pyrophosphoryl-MurNAc-pentapeptide (lipid intermediate I) to form undecaprenyl-pyrophosphoryl-MurNAc-(pentapeptide)GlcNAc (lipid intermediate II). The chain is UDP-N-acetylglucosamine--N-acetylmuramyl-(pentapeptide) pyrophosphoryl-undecaprenol N-acetylglucosamine transferase 1 from Bacillus thuringiensis (strain Al Hakam).